Reading from the N-terminus, the 284-residue chain is 4-hydroxybenzoate octaprenyltransferase (284 aa).

8 helical membrane-spanning segments follow: residues 16–36 (PIGI…ASDG), 40–60 (WTLL…GCAI), 91–111 (LLVA…LNTL), 132–152 (FFAI…PMGF), 157–177 (NTVP…AVAY), 206–226 (VAAV…VGWQ), 231–251 (TWFA…YTLI), and 259–279 (CFAA…GVVL).

This sequence belongs to the UbiA prenyltransferase family. Mg(2+) serves as cofactor.

The protein resides in the cell inner membrane. It carries out the reaction all-trans-octaprenyl diphosphate + 4-hydroxybenzoate = 4-hydroxy-3-(all-trans-octaprenyl)benzoate + diphosphate. Its pathway is cofactor biosynthesis; ubiquinone biosynthesis. Functionally, catalyzes the prenylation of para-hydroxybenzoate (PHB) with an all-trans polyprenyl group. Mediates the second step in the final reaction sequence of ubiquinone-8 (UQ-8) biosynthesis, which is the condensation of the polyisoprenoid side chain with PHB, generating the first membrane-bound Q intermediate 3-octaprenyl-4-hydroxybenzoate. This chain is 4-hydroxybenzoate octaprenyltransferase, found in Herminiimonas arsenicoxydans.